The chain runs to 346 residues: Phosphate acyltransferase (346 aa).

It belongs to the PlsX family. In terms of assembly, homodimer. Probably interacts with PlsY.

It is found in the cytoplasm. It catalyses the reaction a fatty acyl-[ACP] + phosphate = an acyl phosphate + holo-[ACP]. It functions in the pathway lipid metabolism; phospholipid metabolism. Catalyzes the reversible formation of acyl-phosphate (acyl-PO(4)) from acyl-[acyl-carrier-protein] (acyl-ACP). This enzyme utilizes acyl-ACP as fatty acyl donor, but not acyl-CoA. This chain is Phosphate acyltransferase, found in Crocosphaera subtropica (strain ATCC 51142 / BH68) (Cyanothece sp. (strain ATCC 51142)).